The chain runs to 275 residues: NH(3)-dependent NAD(+) synthetase (275 aa).

Residue 47 to 54 (GISGGQDS) participates in ATP binding. Mg(2+) is bound at residue Asp-53. Arg-141 contributes to the deamido-NAD(+) binding site. Thr-161 contributes to the ATP binding site. Mg(2+) is bound at residue Glu-166. Lys-174 and Asp-181 together coordinate deamido-NAD(+). Lys-190 and Thr-212 together coordinate ATP. Residue 261-262 (HK) coordinates deamido-NAD(+).

The protein belongs to the NAD synthetase family. Homodimer.

It catalyses the reaction deamido-NAD(+) + NH4(+) + ATP = AMP + diphosphate + NAD(+) + H(+). It participates in cofactor biosynthesis; NAD(+) biosynthesis; NAD(+) from deamido-NAD(+) (ammonia route): step 1/1. Functionally, catalyzes the ATP-dependent amidation of deamido-NAD to form NAD. Uses ammonia as a nitrogen source. This Lactiplantibacillus plantarum (strain ATCC BAA-793 / NCIMB 8826 / WCFS1) (Lactobacillus plantarum) protein is NH(3)-dependent NAD(+) synthetase.